The sequence spans 173 residues: Shikimate kinase 1 (173 aa).

14 to 19 is an ATP binding site; sequence GAGKST. A Mg(2+)-binding site is contributed by Ser-18. Residues Asp-36, Arg-60, and Gly-82 each coordinate substrate. Arg-120 serves as a coordination point for ATP. Arg-140 is a substrate binding site. Gln-157 contacts ATP.

It belongs to the shikimate kinase family. As to quaternary structure, monomer. It depends on Mg(2+) as a cofactor.

The protein localises to the cytoplasm. It carries out the reaction shikimate + ATP = 3-phosphoshikimate + ADP + H(+). Its pathway is metabolic intermediate biosynthesis; chorismate biosynthesis; chorismate from D-erythrose 4-phosphate and phosphoenolpyruvate: step 5/7. Catalyzes the specific phosphorylation of the 3-hydroxyl group of shikimic acid using ATP as a cosubstrate. In Erwinia tasmaniensis (strain DSM 17950 / CFBP 7177 / CIP 109463 / NCPPB 4357 / Et1/99), this protein is Shikimate kinase 1.